A 500-amino-acid chain; its full sequence is L-2-amino-4-chloropent-4-enoate dechlorinase/desaturase (500 aa).

An N6-(pyridoxal phosphate)lysine modification is found at Lys-311.

This sequence belongs to the trans-sulfuration enzymes family. It depends on pyridoxal 5'-phosphate as a cofactor.

It catalyses the reaction L-2-amino-4-chloropent-4-enoate = L-propargylglycine + chloride + H(+). The protein operates within amino-acid metabolism. It participates in antibiotic biosynthesis. In terms of biological role, involved in the biosynthesis of terminal alkyne-containing amino acids such as L-propargylglycine (Pra) and L-beta-ethynylserine, that are produced as antibiotics by S.cattleya. Catalyzes gamma-elimination of chloride from 4-chloro-allyl-L-glycine (also named L-2-amino-4-chloropent-4-enoate), followed by an isomerization, to form the terminal-alkyne product L-propargylglycine. The sequence is that of L-2-amino-4-chloropent-4-enoate dechlorinase/desaturase from Streptantibioticus cattleyicolor (strain ATCC 35852 / DSM 46488 / JCM 4925 / NBRC 14057 / NRRL 8057) (Streptomyces cattleya).